A 92-amino-acid chain; its full sequence is RNA-binding protein Hfq (92 aa).

The Sm domain occupies 9-68 (DPFLNALRRERVPVSVYLVNGIKLQGTIESFDQFVVLLRNTVSQMVYKHAISTVVPARNV). The tract at residues 73–92 (GGGYVQSNEGNQAEDDDVEQ) is disordered.

Belongs to the Hfq family. As to quaternary structure, homohexamer.

In terms of biological role, RNA chaperone that binds small regulatory RNA (sRNAs) and mRNAs to facilitate mRNA translational regulation in response to envelope stress, environmental stress and changes in metabolite concentrations. Also binds with high specificity to tRNAs. This Xanthomonas axonopodis pv. citri (strain 306) protein is RNA-binding protein Hfq.